Here is a 424-residue protein sequence, read N- to C-terminus: Histidine--tRNA ligase (424 aa).

Belongs to the class-II aminoacyl-tRNA synthetase family. As to quaternary structure, homodimer.

It is found in the cytoplasm. It catalyses the reaction tRNA(His) + L-histidine + ATP = L-histidyl-tRNA(His) + AMP + diphosphate + H(+). This chain is Histidine--tRNA ligase, found in Pediococcus pentosaceus (strain ATCC 25745 / CCUG 21536 / LMG 10740 / 183-1w).